Reading from the N-terminus, the 289-residue chain is Formamidopyrimidine-DNA glycosylase (289 aa).

Pro-2 acts as the Schiff-base intermediate with DNA in catalysis. Residue Glu-3 is the Proton donor of the active site. Residue Lys-61 is the Proton donor; for beta-elimination activity of the active site. 3 residues coordinate DNA: His-96, Arg-115, and Lys-161. The FPG-type zinc-finger motif lies at 247 to 281 (SAYGQEDRPCPRCGTAIRREKFMNRSSFSCPKCQR). Arg-271 acts as the Proton donor; for delta-elimination activity in catalysis.

This sequence belongs to the FPG family. As to quaternary structure, monomer. Zn(2+) serves as cofactor.

The enzyme catalyses Hydrolysis of DNA containing ring-opened 7-methylguanine residues, releasing 2,6-diamino-4-hydroxy-5-(N-methyl)formamidopyrimidine.. The catalysed reaction is 2'-deoxyribonucleotide-(2'-deoxyribose 5'-phosphate)-2'-deoxyribonucleotide-DNA = a 3'-end 2'-deoxyribonucleotide-(2,3-dehydro-2,3-deoxyribose 5'-phosphate)-DNA + a 5'-end 5'-phospho-2'-deoxyribonucleoside-DNA + H(+). In terms of biological role, involved in base excision repair of DNA damaged by oxidation or by mutagenic agents. Acts as a DNA glycosylase that recognizes and removes damaged bases. Has a preference for oxidized purines, such as 7,8-dihydro-8-oxoguanine (8-oxoG). Has AP (apurinic/apyrimidinic) lyase activity and introduces nicks in the DNA strand. Cleaves the DNA backbone by beta-delta elimination to generate a single-strand break at the site of the removed base with both 3'- and 5'-phosphates. The polypeptide is Formamidopyrimidine-DNA glycosylase (Rhodococcus opacus (strain B4)).